The sequence spans 502 residues: ATP synthase subunit alpha, chloroplastic (502 aa).

ATP is bound at residue 170 to 177 (GDRQTGKT).

The protein belongs to the ATPase alpha/beta chains family. As to quaternary structure, F-type ATPases have 2 components, CF(1) - the catalytic core - and CF(0) - the membrane proton channel. CF(1) has five subunits: alpha(3), beta(3), gamma(1), delta(1), epsilon(1). CF(0) has four main subunits: a, b, b' and c.

The protein resides in the plastid. It is found in the chloroplast thylakoid membrane. The enzyme catalyses ATP + H2O + 4 H(+)(in) = ADP + phosphate + 5 H(+)(out). In terms of biological role, produces ATP from ADP in the presence of a proton gradient across the membrane. The alpha chain is a regulatory subunit. The polypeptide is ATP synthase subunit alpha, chloroplastic (Tupiella akineta (Green alga)).